The sequence spans 326 residues: Protoheme IX farnesyltransferase (326 aa).

Helical transmembrane passes span 35 to 55 (LIPL…GWPL), 60 to 80 (LVCT…LNCL), 106 to 126 (SAFI…VSGV), 129 to 149 (LAAG…TALL), 157 to 177 (IVIG…AATG), 185 to 205 (WLFA…ALLL), 242 to 262 (GFGV…LLPF), and 283 to 303 (AKGL…LLIL).

Belongs to the UbiA prenyltransferase family. Protoheme IX farnesyltransferase subfamily.

It localises to the cell inner membrane. It catalyses the reaction heme b + (2E,6E)-farnesyl diphosphate + H2O = Fe(II)-heme o + diphosphate. Its pathway is porphyrin-containing compound metabolism; heme O biosynthesis; heme O from protoheme: step 1/1. Functionally, converts heme B (protoheme IX) to heme O by substitution of the vinyl group on carbon 2 of heme B porphyrin ring with a hydroxyethyl farnesyl side group. This Parasynechococcus marenigrum (strain WH8102) protein is Protoheme IX farnesyltransferase.